A 426-amino-acid polypeptide reads, in one-letter code: UDP-N-acetylglucosamine 1-carboxyvinyltransferase (426 aa).

Residue 22–23 (KN) participates in phosphoenolpyruvate binding. Position 94 (R94) interacts with UDP-N-acetyl-alpha-D-glucosamine. The active-site Proton donor is C118. C118 is modified (2-(S-cysteinyl)pyruvic acid O-phosphothioketal). Residues 123 to 127 (RPVDL), D309, and I331 contribute to the UDP-N-acetyl-alpha-D-glucosamine site.

This sequence belongs to the EPSP synthase family. MurA subfamily.

It localises to the cytoplasm. It carries out the reaction phosphoenolpyruvate + UDP-N-acetyl-alpha-D-glucosamine = UDP-N-acetyl-3-O-(1-carboxyvinyl)-alpha-D-glucosamine + phosphate. It participates in cell wall biogenesis; peptidoglycan biosynthesis. Cell wall formation. Adds enolpyruvyl to UDP-N-acetylglucosamine. The polypeptide is UDP-N-acetylglucosamine 1-carboxyvinyltransferase (Paracoccus denitrificans (strain Pd 1222)).